A 620-amino-acid polypeptide reads, in one-letter code: Membrane protein insertase YidC (620 aa).

6 helical membrane-spanning segments follow: residues Q5–T25, L343–L363, V366–L386, L436–F456, L482–I502, and P529–V549.

It belongs to the OXA1/ALB3/YidC family. Type 1 subfamily. In terms of assembly, interacts with the Sec translocase complex via SecD. Specifically interacts with transmembrane segments of nascent integral membrane proteins during membrane integration.

It is found in the cell inner membrane. Required for the insertion and/or proper folding and/or complex formation of integral membrane proteins into the membrane. Involved in integration of membrane proteins that insert both dependently and independently of the Sec translocase complex, as well as at least some lipoproteins. Aids folding of multispanning membrane proteins. The sequence is that of Membrane protein insertase YidC from Cytophaga hutchinsonii (strain ATCC 33406 / DSM 1761 / CIP 103989 / NBRC 15051 / NCIMB 9469 / D465).